The chain runs to 161 residues: Nucleotide-binding protein Bamb_2603 (161 aa).

This sequence belongs to the YajQ family.

In terms of biological role, nucleotide-binding protein. The chain is Nucleotide-binding protein Bamb_2603 from Burkholderia ambifaria (strain ATCC BAA-244 / DSM 16087 / CCUG 44356 / LMG 19182 / AMMD) (Burkholderia cepacia (strain AMMD)).